The primary structure comprises 691 residues: Homeobox protein NOBOX (691 aa).

Over residues glutamate 94–glutamate 103 the composition is skewed to basic and acidic residues. The disordered stretch occupies residues glutamate 94–valine 233. Polar residues predominate over residues proline 216–alanine 228. The segment at residues arginine 272–glutamate 363 is a DNA-binding region (homeobox). 3 disordered regions span residues asparagine 366–serine 385, valine 394–valine 437, and glutamine 635–proline 691. Residues proline 395–glutamine 405 show a composition bias toward pro residues. Over residues threonine 420–glutamate 432 the composition is skewed to polar residues. The segment covering glutamate 679–proline 691 has biased composition (basic and acidic residues).

In terms of tissue distribution, expressed in ovaries, testes and pancreas. Expressed within all stages of the adult female germline, from primordial follicles through to MII oocytes.

The protein localises to the nucleus. Transcription factor which may play a role in oogenesis. Binds preferentially to the DNA sequences 5'-TAATTG-3', 5'-TAGTTG-3' and 5'-TAATTA-3'. This chain is Homeobox protein NOBOX (NOBOX), found in Homo sapiens (Human).